We begin with the raw amino-acid sequence, 114 residues long: CDIPQSTNCGGNVYSNDDINTAIQGALDDVANGDRPDNYPHQYYDEASEDITLCCGSGPWSEFPLVYNGPYYSSRDNYVSPGPDRVIYQTNTGEFCATVTHTGAASYDGFTQCS.

Intrachain disulfides connect Cys-1/Cys-54, Cys-9/Cys-113, and Cys-55/Cys-96. The Ca(2+) site is built by Asp-29, Val-30, Ala-31, Asn-32, Asp-37, and Tyr-39. 39–49 (YPHQYYDEASE) provides a ligand contact to substrate. The active site involves His-41. Glu-62 acts as the Proton acceptor in catalysis. A substrate-binding site is contributed by Arg-85. Residue His-101 is the Proton donor of the active site. 108-110 (DGF) contacts substrate.

This sequence belongs to the ribonuclease U2 family.

It catalyses the reaction [RNA] containing adenosine + H2O = an [RNA fragment]-3'-adenosine-3'-phosphate + a 5'-hydroxy-ribonucleotide-3'-[RNA fragment].. It carries out the reaction [RNA] containing guanosine + H2O = an [RNA fragment]-3'-guanosine-3'-phosphate + a 5'-hydroxy-ribonucleotide-3'-[RNA fragment].. The protein is Ribonuclease U2 (RNU2) of Ustilago sphaerogena (Smut fungus).